The primary structure comprises 222 residues: LexA repressor (222 aa).

A DNA-binding region (H-T-H motif) is located at residues 28–48 (IREIGEHMDIRSTNGVNDHLK). Catalysis depends on for autocatalytic cleavage activity residues S135 and K172.

The protein belongs to the peptidase S24 family. In terms of assembly, homodimer.

It carries out the reaction Hydrolysis of Ala-|-Gly bond in repressor LexA.. In terms of biological role, represses a number of genes involved in the response to DNA damage (SOS response), including recA and lexA. In the presence of single-stranded DNA, RecA interacts with LexA causing an autocatalytic cleavage which disrupts the DNA-binding part of LexA, leading to derepression of the SOS regulon and eventually DNA repair. This Myxococcus xanthus (strain DK1622) protein is LexA repressor.